The primary structure comprises 462 residues: Cleavage and polyadenylation specificity factor subunit 7 (462 aa).

Disordered regions lie at residues 34–68 (VLTAASQPSDDRSSSTEPPPPVRQEPAPKPNNKTP) and 161–213 (TRQN…PSVL). Pro residues predominate over residues 50–62 (EPPPPVRQEPAPK). The region spanning 82 to 162 (AAVYVGSFSW…EKVDVRPATR (81 aa)) is the RRM domain. Residues 181–190 (HSRDSSDSAD) show a composition bias toward basic and acidic residues. Thr-194 bears the Phosphothreonine mark. Position 196 is a phosphoserine (Ser-196). A Glycyl lysine isopeptide (Lys-Gly) (interchain with G-Cter in SUMO2) cross-link involves residue Lys-345. The disordered stretch occupies residues 400-462 (SVGASGSSSR…HRDRERDRHH (63 aa)). 2 positions are modified to phosphoserine: Ser-404 and Ser-414. Residues 409–460 (RKRHRSRERSPSRSRESSRRHRDLLHNEDRHDDYFQERNREHERHRDRERDR) form an arg/Ser-rich domain region. Composition is skewed to basic and acidic residues over residues 416 to 425 (ERSPSRSRES) and 432 to 462 (LLHNEDRHDDYFQERNREHERHRDRERDRHH).

The protein belongs to the RRM CPSF6/7 family. As to quaternary structure, component of the cleavage factor Im (CFIm) complex which is a heterotetramer composed of two subunits of NUDT21/CPSF5 and two subunits of CPSF6 or CPSF7 or a heterodimer of CPSF6 and CPSF7. The cleavage factor Im (CFIm) complex associates with the CPSF and CSTF complexes to promote the assembly of the core mRNA 3'-processing machinery. Interacts with NUDT21/CPSF5. Interacts (via Arg/Ser-rich domain) with FIP1L1 (preferentially via unphosphorylated form and Arg/Glu/Asp-rich region); this interaction mediates, at least in part, the interaction between the CFIm and CPSF complexes and may be inhibited by CPSF7 hyper-phosphorylation. Post-translationally, phosphorylated. In terms of processing, asymmetrically dimethylated on arginine residues by PRMT1.

It localises to the nucleus. Its subcellular location is the cytoplasm. Its function is as follows. Component of the cleavage factor Im (CFIm) complex that functions as an activator of the pre-mRNA 3'-end cleavage and polyadenylation processing required for the maturation of pre-mRNA into functional mRNAs. CFIm contributes to the recruitment of multiprotein complexes on specific sequences on the pre-mRNA 3'-end, so called cleavage and polyadenylation signals (pA signals). Most pre-mRNAs contain multiple pA signals, resulting in alternative cleavage and polyadenylation (APA) producing mRNAs with variable 3'-end formation. The CFIm complex acts as a key regulator of cleavage and polyadenylation site choice during APA through its binding to 5'-UGUA-3' elements localized in the 3'-untranslated region (UTR) for a huge number of pre-mRNAs. CPSF7 activates directly the mRNA 3'-processing machinery. Binds to pA signals in RNA substrates. In Rattus norvegicus (Rat), this protein is Cleavage and polyadenylation specificity factor subunit 7.